Consider the following 214-residue polypeptide: GTP-binding nuclear protein Ran (214 aa).

One can recognise a Small GTPase Ran-type domain in the interval 6–170 (YIPQYKLILV…LWLARRLSNQ (165 aa)). 17-24 (DGGVGKTT) is a binding site for GTP. The tract at residues 36 to 44 (KKYIPTLGV) is switch-I. GTP is bound by residues Gly-67, 121-124 (NKVD), and 149-151 (SAR). Positions 67–83 (GQEKFGGLRDGYYIKSD) are switch-II.

It belongs to the small GTPase superfamily. Ran family. Found in a nuclear export complex with RanGTP, exportin and pre-miRNA.

The protein localises to the nucleus. In terms of biological role, GTP-binding protein involved in nucleocytoplasmic transport. Required for the import of protein into the nucleus and also for RNA export. Involved in chromatin condensation and control of cell cycle. The sequence is that of GTP-binding nuclear protein Ran from Plasmodium falciparum.